The chain runs to 58 residues: UPF0391 membrane protein OCAR_5266/OCA5_c27040 (58 aa).

The next 2 membrane-spanning stretches (helical) occupy residues 4–24 (WVVT…GGIA) and 30–50 (IAKI…VVGL).

The protein belongs to the UPF0391 family.

It localises to the cell membrane. The sequence is that of UPF0391 membrane protein OCAR_5266/OCA5_c27040 from Afipia carboxidovorans (strain ATCC 49405 / DSM 1227 / KCTC 32145 / OM5) (Oligotropha carboxidovorans).